We begin with the raw amino-acid sequence, 264 residues long: Zinc import ATP-binding protein ZnuC (264 aa).

Residues 11–226 form the ABC transporter domain; the sequence is IELQNIKVVF…PTFIHLFGDQ (216 aa). 43–50 contributes to the ATP binding site; it reads GPNGGGKS.

This sequence belongs to the ABC transporter superfamily. Zinc importer (TC 3.A.1.15.5) family. The complex is composed of two ATP-binding proteins (ZnuC), two transmembrane proteins (ZnuB) and a solute-binding protein (ZnuA).

It localises to the cell inner membrane. It catalyses the reaction Zn(2+)(out) + ATP(in) + H2O(in) = Zn(2+)(in) + ADP(in) + phosphate(in) + H(+)(in). In terms of biological role, part of the ABC transporter complex ZnuABC involved in zinc import. Responsible for energy coupling to the transport system. The polypeptide is Zinc import ATP-binding protein ZnuC (Mannheimia succiniciproducens (strain KCTC 0769BP / MBEL55E)).